The chain runs to 356 residues: Pavine N-methyltransferase (356 aa).

8 residues coordinate S-adenosyl-L-homocysteine: Phe-96, Ser-97, Gly-135, Asn-159, Gln-163, Asp-185, Val-186, and Val-201. S-adenosyl-L-methionine contacts are provided by Phe-96, Ser-97, Gly-135, Asn-159, Gln-163, Asp-185, Val-186, and Val-201. Glu-205 lines the (S)-tetrahydropapaverine pocket. Residue Cys-331 is part of the active site.

It belongs to the CFA/CMAS family. As to quaternary structure, homodimer.

It is found in the cytoplasm. The enzyme catalyses (+-)-pavine + S-adenosyl-L-methionine = N-methylpavine + S-adenosyl-L-homocysteine + H(+). It catalyses the reaction (S)-reticuline + S-adenosyl-L-methionine = (S)-tembetarine + S-adenosyl-L-homocysteine + H(+). The catalysed reaction is (S)-stylopine + S-adenosyl-L-methionine = (S)-cis-N-methylstylopine + S-adenosyl-L-homocysteine. It carries out the reaction (S)-scoulerine + S-adenosyl-L-methionine = (S)-cis-N-methylscoulerine + S-adenosyl-L-homocysteine. The enzyme catalyses (S)-tetrahydropapaverine + S-adenosyl-L-methionine = (S)-N-methyltetrahydropapaverine + S-adenosyl-L-homocysteine + H(+). It catalyses the reaction (S)-tetrahydropalmatine + S-adenosyl-L-methionine = (S)-cis-N-methyltetrahydropalmatine + S-adenosyl-L-homocysteine. Its pathway is alkaloid biosynthesis. With respect to regulation, in the presence of a racemic mixture of tetrahydropapaverine (THP), one molecule of (S)-THP binds in a productive mode, while one molecule of (R)-THP is bound next to it in a non-productive mode. The (R)-THP seems to inhibit the release of products from the enzyme when higher concentrations of the racemic substrate are added to the reaction. N-methyltransferase with a substrate preference for (+-)-pavine and (S)-reticuline, but also active with the protoberberines scoulerine and stylopine and, to a lesser extent, tetrahydropapaverine (THP) and tetrahydropalmatine. Is not active on (R)-reticuline, cryptopine, glaucine, codeine, canadaline, noscapine and berbamine. The chain is Pavine N-methyltransferase from Thalictrum flavum subsp. glaucum (Yellow meadow rue).